A 355-amino-acid polypeptide reads, in one-letter code: Peptide chain release factor 1 (355 aa).

N5-methylglutamine is present on Q233. Residues 280–293 are compositionally biased toward basic and acidic residues; it reads ERRKKEQERADSRR. A disordered region spans residues 280–308; that stretch reads ERRKKEQERADSRRGQVGSGDRSERIRTY.

Belongs to the prokaryotic/mitochondrial release factor family. Post-translationally, methylated by PrmC. Methylation increases the termination efficiency of RF1.

The protein localises to the cytoplasm. Peptide chain release factor 1 directs the termination of translation in response to the peptide chain termination codons UAG and UAA. In Rickettsia peacockii (strain Rustic), this protein is Peptide chain release factor 1.